The sequence spans 122 residues: Atrial gland peptide B (122 aa).

The first 21 residues, 1 to 21 (MKANTMFIILCLTLSTLCVSS), serve as a signal peptide directing secretion. A propeptide spanning residues 22-34 (QFTSVLGKIFVTN) is cleaved from the precursor. Position 69 is an isoleucine amide (Ile-69). Residues 73–122 (AAGGMEQSEGQNPETKSHSWRERSVLTPSLLSLGESLESGISKRISINQD) constitute a propeptide that is removed on maturation. Residues 74-95 (AGGMEQSEGQNPETKSHSWRER) are disordered.

It belongs to the molluscan ELH family.

The protein resides in the secreted. Functionally, the atrial gland peptide A and peptide B precursors are the source of the 2 peptides that, upon release from this reproductive system gland, initiate the egg-laying process by exciting the bag cell neurons. These neurons, clustered in neural connectives near the abdominal ganglion, in turn release other peptides that act directly on the ganglion and also, via the circulating hemolymph, on many other organs to control the physiological processes of egg-laying. One of these other peptides is the egg-laying hormone. The protein is Atrial gland peptide B of Aplysia californica (California sea hare).